A 152-amino-acid chain; its full sequence is Ribosome maturation factor RimP (152 aa).

It belongs to the RimP family.

The protein resides in the cytoplasm. Its function is as follows. Required for maturation of 30S ribosomal subunits. The polypeptide is Ribosome maturation factor RimP (Fervidobacterium nodosum (strain ATCC 35602 / DSM 5306 / Rt17-B1)).